Reading from the N-terminus, the 402-residue chain is Pyridinium-3,5-bisthiocarboxylic acid mononucleotide nickel insertion protein (402 aa).

The protein belongs to the LarC family.

It carries out the reaction Ni(II)-pyridinium-3,5-bisthiocarboxylate mononucleotide = pyridinium-3,5-bisthiocarboxylate mononucleotide + Ni(2+). Involved in the biosynthesis of a nickel-pincer cofactor ((SCS)Ni(II) pincer complex). Binds Ni(2+), and functions in nickel delivery to pyridinium-3,5-bisthiocarboxylic acid mononucleotide (P2TMN), to form the mature cofactor. Is thus probably required for the activation of nickel-pincer cofactor-dependent enzymes. In Desulfitobacterium hafniense (strain Y51), this protein is Pyridinium-3,5-bisthiocarboxylic acid mononucleotide nickel insertion protein.